The chain runs to 214 residues: Large ribosomal subunit protein uL6m (214 aa).

The transit peptide at 1–16 (MSFIQRRLLSQTLFLR) directs the protein to the mitochondrion.

It belongs to the universal ribosomal protein uL6 family. Component of the mitochondrial large ribosomal subunit (mt-LSU). Mature yeast 74S mitochondrial ribosomes consist of a small (37S) and a large (54S) subunit. The 37S small subunit contains a 15S ribosomal RNA (15S mt-rRNA) and 34 different proteins. The 54S large subunit contains a 21S rRNA (21S mt-rRNA) and 46 different proteins.

It localises to the mitochondrion. Its function is as follows. Component of the mitochondrial ribosome (mitoribosome), a dedicated translation machinery responsible for the synthesis of mitochondrial genome-encoded proteins, including at least some of the essential transmembrane subunits of the mitochondrial respiratory chain. The mitoribosomes are attached to the mitochondrial inner membrane and translation products are cotranslationally integrated into the membrane. The chain is Large ribosomal subunit protein uL6m (MRPL6) from Saccharomyces cerevisiae (strain ATCC 204508 / S288c) (Baker's yeast).